We begin with the raw amino-acid sequence, 90 residues long: DNA-directed RNA polymerase subunit omega (90 aa).

A disordered region spans residues 69-90; the sequence is RQEQQEQEAAELAAVSSIARNR.

Belongs to the RNA polymerase subunit omega family. The RNAP catalytic core consists of 2 alpha, 1 beta, 1 beta' and 1 omega subunit. When a sigma factor is associated with the core the holoenzyme is formed, which can initiate transcription.

The catalysed reaction is RNA(n) + a ribonucleoside 5'-triphosphate = RNA(n+1) + diphosphate. Its function is as follows. Promotes RNA polymerase assembly. Latches the N- and C-terminal regions of the beta' subunit thereby facilitating its interaction with the beta and alpha subunits. The protein is DNA-directed RNA polymerase subunit omega of Vibrio vulnificus (strain CMCP6).